Here is a 142-residue protein sequence, read N- to C-terminus: Hemoglobin subunit beta (142 aa).

The Globin domain occupies 3-142 (KLSEDQEHYI…VAEALSSNYH (140 aa)). Heme b-binding residues include His-60 and His-89.

Belongs to the globin family. As to quaternary structure, heterotetramer of two alpha chains and two beta chains. In terms of tissue distribution, red blood cells.

Functionally, involved in oxygen transport from gills to the various peripheral tissues. The protein is Hemoglobin subunit beta (HBB) of Hemitrygon akajei (Red stingray).